Reading from the N-terminus, the 71-residue chain is Conotoxin TxMMSK-05 (71 aa).

The N-terminal stretch at Met-1 to Ala-20 is a signal peptide. The propeptide occupies Val-21–Arg-52. 3 cysteine pairs are disulfide-bonded: Cys-54-Cys-70, Cys-55-Cys-66, and Cys-60-Cys-69.

The protein belongs to the conotoxin M superfamily. As to expression, expressed by the venom duct.

The protein resides in the secreted. The sequence is that of Conotoxin TxMMSK-05 from Conus textile (Cloth-of-gold cone).